The chain runs to 758 residues: Polyribonucleotide nucleotidyltransferase (758 aa).

The Mg(2+) site is built by Asp482 and Asp488. Positions 549 to 608 (PRVLSFYIDKDKISAAIGTKGKNIRSVCERSNAKIEIGDDGKVSVFAISSTEAEAAKNMM) constitute a KH domain. Positions 618-686 (GSIIDAKVVK…KGGCPKLSRR (69 aa)) constitute an S1 motif domain. A disordered region spans residues 707-758 (DGLNNRDNYYNNSFNKKPEDNYHSNRPTRPRSGFSNRSRPKFGNNDSSSGFY). Low complexity predominate over residues 711–721 (NRDNYYNNSFN).

This sequence belongs to the polyribonucleotide nucleotidyltransferase family. Mg(2+) is required as a cofactor.

It localises to the cytoplasm. It catalyses the reaction RNA(n+1) + phosphate = RNA(n) + a ribonucleoside 5'-diphosphate. Functionally, involved in mRNA degradation. Catalyzes the phosphorolysis of single-stranded polyribonucleotides processively in the 3'- to 5'-direction. The chain is Polyribonucleotide nucleotidyltransferase from Wolbachia pipientis subsp. Culex pipiens (strain wPip).